A 136-amino-acid polypeptide reads, in one-letter code: Large ribosomal subunit protein uL22 (136 aa).

This sequence belongs to the universal ribosomal protein uL22 family. Part of the 50S ribosomal subunit.

This protein binds specifically to 23S rRNA; its binding is stimulated by other ribosomal proteins, e.g. L4, L17, and L20. It is important during the early stages of 50S assembly. It makes multiple contacts with different domains of the 23S rRNA in the assembled 50S subunit and ribosome. In terms of biological role, the globular domain of the protein is located near the polypeptide exit tunnel on the outside of the subunit, while an extended beta-hairpin is found that lines the wall of the exit tunnel in the center of the 70S ribosome. The chain is Large ribosomal subunit protein uL22 from Leifsonia xyli subsp. xyli (strain CTCB07).